A 275-amino-acid chain; its full sequence is Formamidopyrimidine-DNA glycosylase (275 aa).

The active-site Schiff-base intermediate with DNA is the Pro2. The active-site Proton donor is Glu3. Lys58 acts as the Proton donor; for beta-elimination activity in catalysis. 3 residues coordinate DNA: His93, Arg111, and Arg156. The segment at 241–275 (FVYDRAGQPCRVCNTPIRQIVQGQRSTYFCPTCQR) adopts an FPG-type zinc-finger fold. Arg265 acts as the Proton donor; for delta-elimination activity in catalysis.

The protein belongs to the FPG family. In terms of assembly, monomer. The cofactor is Zn(2+).

It catalyses the reaction Hydrolysis of DNA containing ring-opened 7-methylguanine residues, releasing 2,6-diamino-4-hydroxy-5-(N-methyl)formamidopyrimidine.. It carries out the reaction 2'-deoxyribonucleotide-(2'-deoxyribose 5'-phosphate)-2'-deoxyribonucleotide-DNA = a 3'-end 2'-deoxyribonucleotide-(2,3-dehydro-2,3-deoxyribose 5'-phosphate)-DNA + a 5'-end 5'-phospho-2'-deoxyribonucleoside-DNA + H(+). Its function is as follows. Involved in base excision repair of DNA damaged by oxidation or by mutagenic agents. Acts as a DNA glycosylase that recognizes and removes damaged bases. Has a preference for oxidized purines, such as 7,8-dihydro-8-oxoguanine (8-oxoG). Has AP (apurinic/apyrimidinic) lyase activity and introduces nicks in the DNA strand. Cleaves the DNA backbone by beta-delta elimination to generate a single-strand break at the site of the removed base with both 3'- and 5'-phosphates. The sequence is that of Formamidopyrimidine-DNA glycosylase from Burkholderia lata (strain ATCC 17760 / DSM 23089 / LMG 22485 / NCIMB 9086 / R18194 / 383).